Consider the following 517-residue polypeptide: Serine O-succinyltransferase (517 aa).

The transit peptide at 1 to 46 directs the protein to the mitochondrion; it reads MSPLNGVARSLPRPFQAVARRPFRVAQPAVACPSNRRSFNHSRSLR. The interval 34–66 is disordered; sequence SNRRSFNHSRSLRSTGSQSPAPSPRDSSNPALS. Positions 45-64 are enriched in polar residues; the sequence is LRSTGSQSPAPSPRDSSNPA. Residues 134 to 386 enclose the AB hydrolase-1 domain; the sequence is NVILLHTGLS…LTQQLATKKQ (253 aa). The interval 141-144 is important for substrate specificity; sequence GLSA. Serine 238 (nucleophile) is an active-site residue. Arginine 307 provides a ligand contact to substrate. Positions 413-436 are disordered; the sequence is QPYQEQPSASTSAEQSASASETGS. The segment covering 416–436 has biased composition (low complexity); the sequence is QEQPSASTSAEQSASASETGS. Residues aspartate 461 and histidine 498 contribute to the active site. Aspartate 499 is a substrate binding site.

It belongs to the AB hydrolase superfamily. MetX family.

It localises to the mitochondrion. It carries out the reaction succinyl-CoA + L-serine = O-succinyl-L-serine + CoA. Its pathway is amino-acid biosynthesis; L-cysteine biosynthesis; L-cysteine from L-serine: step 1/2. Functionally, transfers a succinyl group from succinyl-CoA to L-serine, forming succinyl-L-serine. Also has weak serine acetyl transferase activity and homoserine succinyl transferase activity. The sequence is that of Serine O-succinyltransferase from Emericella nidulans (Aspergillus nidulans).